The chain runs to 321 residues: Cytochrome c biogenesis protein CcsA (321 aa).

A run of 7 helical transmembrane segments spans residues 17-37, 43-63, 71-91, 143-163, 225-245, 258-273, and 286-306; these read IISI…IVGL, KGMI…WIYS, LYES…VPKI, MLLS…LLVI, VISL…VWAN, ETWA…IYLH, and AIVA…VNLL.

The protein belongs to the CcmF/CycK/Ccl1/NrfE/CcsA family. May interact with Ccs1.

Its subcellular location is the plastid. It is found in the chloroplast thylakoid membrane. Its function is as follows. Required during biogenesis of c-type cytochromes (cytochrome c6 and cytochrome f) at the step of heme attachment. The polypeptide is Cytochrome c biogenesis protein CcsA (Liriodendron tulipifera (Tuliptree)).